The primary structure comprises 263 residues: Small ribosomal subunit protein eS4 (263 aa).

The S4 RNA-binding domain occupies 42 to 104 (LPLIIFLRNR…TGENFRLIYD (63 aa)).

This sequence belongs to the eukaryotic ribosomal protein eS4 family.

In Ictalurus punctatus (Channel catfish), this protein is Small ribosomal subunit protein eS4 (rps4).